The sequence spans 242 residues: uncharacterized protein (242 aa).

The signal sequence occupies residues 1–17; the sequence is MKFSPAYLLAFAPIVAA. Residues Asn47, Asn86, Asn122, Asn159, and Asn178 are each glycosylated (N-linked (GlcNAc...) asparagine). The interval 176-214 is disordered; the sequence is NANESTADGQAQSGSSGSSSDSGSHSGHSSATQTSSTTA. The span at 180–214 shows a compositional bias: low complexity; that stretch reads STADGQAQSGSSGSSSDSGSHSGHSSATQTSSTTA. Residue Ala218 is the site of GPI-like-anchor amidated alanine attachment. The propeptide at 219-242 is removed in mature form; it reads GAVALETAAWGILGAAVVGGLAVL.

The GPI-like anchor contains a phosphoceramide lipid group. The anchor position has not been determined.

The protein localises to the cell membrane. This is an uncharacterized protein from Aspergillus fumigatus (strain ATCC MYA-4609 / CBS 101355 / FGSC A1100 / Af293) (Neosartorya fumigata).